The following is a 194-amino-acid chain: Glycerol-3-phosphate acyltransferase (194 aa).

6 consecutive transmembrane segments (helical) span residues A3 to L23, V52 to W72, M80 to F100, V112 to V132, W135 to F155, and L162 to S182.

It belongs to the PlsY family. In terms of assembly, probably interacts with PlsX.

It is found in the cell inner membrane. The catalysed reaction is an acyl phosphate + sn-glycerol 3-phosphate = a 1-acyl-sn-glycero-3-phosphate + phosphate. The protein operates within lipid metabolism; phospholipid metabolism. In terms of biological role, catalyzes the transfer of an acyl group from acyl-phosphate (acyl-PO(4)) to glycerol-3-phosphate (G3P) to form lysophosphatidic acid (LPA). This enzyme utilizes acyl-phosphate as fatty acyl donor, but not acyl-CoA or acyl-ACP. This chain is Glycerol-3-phosphate acyltransferase, found in Trichlorobacter lovleyi (strain ATCC BAA-1151 / DSM 17278 / SZ) (Geobacter lovleyi).